The chain runs to 366 residues: MAEFVRAQIFGTTFEITSRYTDLQPVGMGAFGLVCSARDQLTGQPVAVKKIMKPFSTPVLSKRTYRELKLLKHLRHENIISLSDIFISPLEDIYFVTELLGTDLHRLLTSRPLEKQFIQYFLYQILRGLKYVHSAGVVHRDLKPSNILINENCDLKICDFGLARIQDPQMTGYVSTRYYRAPEIMLTWQKYDVEVDIWSAGCIFAEMLEGKPLFPGKDHVNQFSIITELLGTPPDDVIQTICSENTLRFVKSLPKRERQPLANKFKNADPEAVDLLERMLVFDPKKRIRAGEALAHEYLTPYHDPTDEPEAEEKFDWSFNDADLPVDTWKIMMYSEILDFHNIDQGNDAGQVLMEGGVAQAHQNYA.

Positions Tyr20 to Leu299 constitute a Protein kinase domain. ATP is bound by residues Val26–Val34 and Lys49. Residue Asp141 is the Proton acceptor of the active site. Phosphothreonine is present on Thr171. The short motif at Thr171 to Tyr173 is the TXY element. Tyr173 is modified (phosphotyrosine).

This sequence belongs to the protein kinase superfamily. Ser/Thr protein kinase family. MAP kinase subfamily. HOG1 sub-subfamily. The cofactor is Mg(2+). In terms of processing, dually phosphorylated on Thr-171 and Tyr-173, which activates the enzyme.

Its subcellular location is the cytoplasm. The protein localises to the nucleus. It catalyses the reaction L-seryl-[protein] + ATP = O-phospho-L-seryl-[protein] + ADP + H(+). It carries out the reaction L-threonyl-[protein] + ATP = O-phospho-L-threonyl-[protein] + ADP + H(+). With respect to regulation, activated by tyrosine and threonine phosphorylation. Functionally, proline-directed serine/threonine-protein kinase involved in a signal transduction pathway that is activated by changes in the osmolarity of the extracellular environment. Controls osmotic regulation of transcription of target genes. The protein is Mitogen-activated protein kinase hog1 (hog1) of Neosartorya fischeri (strain ATCC 1020 / DSM 3700 / CBS 544.65 / FGSC A1164 / JCM 1740 / NRRL 181 / WB 181) (Aspergillus fischerianus).